We begin with the raw amino-acid sequence, 467 residues long: Cytochrome P450 monooxygenase azaI (467 aa).

An N-terminal signal peptide occupies residues 1 to 28 (MESLAQLPGIFLPLAGCVLALSLSALLA). Cys-411 serves as a coordination point for heme.

Belongs to the cytochrome P450 family. Heme is required as a cofactor.

It participates in secondary metabolite biosynthesis. Its function is as follows. Cytochrome P450 monooxygenase; part of the gene cluster that mediates the biosynthesis of azaphilones, a class of fungal metabolites characterized by a highly oxygenated pyrano-quinone bicyclic core and exhibiting a broad range of bioactivities. In the first step, the non-reducing polyketide synthase azaA forms the hexaketide precursor from successive condensations of five malonyl-CoA units, presumably with a simple acetyl-CoA starter unit. The reactive polyketide chain then undergoes a PT-mediated C2-C7 cyclization to afford the aromatic ring and is eventually released as an aldehyde through the R-domain. The putative ketoreductase azaE is proposed to catalyze the reduction of the terminal ketone resulting in the early culture product FK17-P2a. The monooxygenase azaH was demonstrated to be the only enzyme required to convert FK17-P2a to azanigerone E. AzaH first hydroxylates the benzaldehyde intermediate FK17-P2a at C4, which triggers the formation of the pyran-ring to afford azanigerone E. In parallel, the 2,4-dimethylhexanoyl chain is synthesized by the HR-PKS azaB and is proposed to be transferred to the C4-hydroxyl of azanigerone E by the acyltransferase azaD directly from the ACP domain of azaB. Alternatively, the 2,4-dimethyl-hexanoyl chain may be offloaded from the HR-PKS as a carboxylic acid and converted to an acyl-CoA by azaF. The resulting acyl-CoA molecule could then be taken up as a substrate by AzaD to form azanigerone B. To yield the carboxylic acid substituent in azanigerone A, the hydroxypropyl side chain of azanigerone B would need to undergo a C-C oxidative cleavage catalyzed by cytochrome P450 AzaI. AzaI is proposed to act on a vicinal diol that leads to a C-C bond scission either through an alkoxyradical intermediate or a peroxy complex. In the biosynthesis of azanigerone A, azanigerone B first undergoes hydroxylation at C10, possibly catalyzed by one of the two FAD-dependent monooxygenases encoded in the cluster, azaG or azaL, resulting in the vicinal diol azanigerone C. Oxidative cleavage of azanigerone C by azaI would yield the corresponding aldehyde derivative of azanigerone A. Finally, the dehydrogenase azaJ is proposed to convert the aldehyde functional group into the carboxylic acid, completing the conversion from azanigerone B to azanigerone A. Alternatively, the oxidation of aldehyde to carboxylic acid may be catalyzed by the same P450 enzyme azaI via consecutive oxidation or by endogenous alcohol dehydrogenase. This chain is Cytochrome P450 monooxygenase azaI, found in Aspergillus niger (strain ATCC 1015 / CBS 113.46 / FGSC A1144 / LSHB Ac4 / NCTC 3858a / NRRL 328 / USDA 3528.7).